A 1007-amino-acid polypeptide reads, in one-letter code: SUPPRESSOR OF ABI3-5 (1007 aa).

2 disordered regions span residues 1 to 185 and 204 to 269; these read MDPS…RDRE and ESPH…FSAT. Basic and acidic residues-rich tracts occupy residues 40 to 49, 94 to 120, 138 to 185, and 204 to 214; these read PDERLMRDDV, YYHD…RYDG, HSRD…RDRE, and ESPHKRYEKSR. A compositionally biased stretch (basic residues) spans 227–236; that stretch reads RSPRGRSHGR. A compositionally biased stretch (basic and acidic residues) spans 237–264; it reads SYREDSYEGDHWNESERRREYEDRHNQD. Positions 272-352 constitute an RRM 1 domain; that stretch reads ATVVVKGLSM…RKLMFHYSQP (81 aa). A RanBP2-type zinc finger spans residues 378–407; sequence VPTDWICTICGCINFARRTSCFQCNEPKTK. Positions 432–512 constitute an RRM 2 domain; sequence HVLVVRGLDE…KILRVAYAKS (81 aa). Disordered regions lie at residues 556–581, 631–656, 725–755, 771–797, 810–910, and 945–977; these read GEKQ…SAPQ, PDQN…SQQK, HETQ…STGQ, STSN…TLMG, ASSS…GITT, and SGLG…KKVD. Polar residues predominate over residues 631 to 645; the sequence is PDQNNESKVTENQPD. 2 stretches are compositionally biased toward low complexity: residues 778 to 793 and 823 to 835; these read SALT…TTGG and PSAS…VSGS. Residues 849–867 are compositionally biased toward basic and acidic residues; the sequence is THREQPQTSYRDRAAERRN. A G-patch domain is found at 928-974; the sequence is ESNVGNRMLRNMGWHEGSGLGKDGSGMKEPVQAQGVDRRAGLGSQQK.

In terms of assembly, interacts with the pre-spliceosomal component U2AF65A. Ubiquitous with highest expression in siliques toward the end of seed maturation.

The protein localises to the nucleus. Its function is as follows. Splicing factor that controls alternative splicing of the developmental regulator ABI3. Reduces splicing of a cryptic intron in ABI3, leading to a decreased in ABI3-beta transcript. Regulates the splicing of the receptor-like kinase SNC4/LRKL-2.6. This Arabidopsis thaliana (Mouse-ear cress) protein is SUPPRESSOR OF ABI3-5.